The chain runs to 172 residues: Thioredoxin M5, chloroplastic (172 aa).

The N-terminal 59 residues, 1–59, are a transit peptide targeting the chloroplast; the sequence is MALETCFRAWATLHAPQPPSSGGSRDRLLLSGAGSSQSKPRLSVASPSPLRPASRFACQ. The interval 17–47 is disordered; that stretch reads QPPSSGGSRDRLLLSGAGSSQSKPRLSVASP. Positions 60 to 171 constitute a Thioredoxin domain; it reads CSNVVDEVVV…LATIIDKYVS (112 aa). Residues Cys95 and Cys98 each act as nucleophile in the active site. An intrachain disulfide couples Cys95 to Cys98.

Belongs to the thioredoxin family. Plant M-type subfamily. In terms of tissue distribution, expressed in leaves and at lower levels in flowers.

The protein resides in the plastid. It is found in the chloroplast. Its function is as follows. Thiol-disulfide oxidoreductase probably involved in the redox regulation of chloroplastic enzymes. Required for chloroplast biogenesis and differentiation. Functions as an electron donor for plastidial 2-Cys peroxiredoxins and participates in hydrogen peroxide scavenging system in chloroplasts. Possesses reducing activity towards insulin disulfide bonds. This Oryza sativa subsp. japonica (Rice) protein is Thioredoxin M5, chloroplastic (TRXM).